A 317-amino-acid chain; its full sequence is Probable arabinan endo-1,5-alpha-L-arabinosidase C (317 aa).

Residues 1–17 (MLSFLAALSLPLALVNA) form the signal peptide. The active-site Proton acceptor is the D32. The N-linked (GlcNAc...) asparagine glycan is linked to N190. The Proton donor role is filled by E198.

It belongs to the glycosyl hydrolase 43 family.

It is found in the secreted. It catalyses the reaction Endohydrolysis of (1-&gt;5)-alpha-arabinofuranosidic linkages in (1-&gt;5)-arabinans.. It functions in the pathway glycan metabolism; L-arabinan degradation. In terms of biological role, endo-1,5-alpha-L-arabinanase involved in degradation of pectin. Its preferred substrate is linear 1,5-alpha-L-arabinan. The sequence is that of Probable arabinan endo-1,5-alpha-L-arabinosidase C (abnC) from Aspergillus flavus (strain ATCC 200026 / FGSC A1120 / IAM 13836 / NRRL 3357 / JCM 12722 / SRRC 167).